The following is a 308-amino-acid chain: Cobalamin biosynthesis protein CobD (308 aa).

6 helical membrane passes run 1-21 (MEIL…GDPP), 50-70 (FVYG…PVYF), 71-91 (LLDW…AILF), 151-171 (IGDG…PGVM), 202-222 (VLNF…SFFG), and 284-304 (LVLI…VIYF).

It belongs to the CobD/CbiB family.

Its subcellular location is the cell membrane. Its pathway is cofactor biosynthesis; adenosylcobalamin biosynthesis. Its function is as follows. Converts cobyric acid to cobinamide by the addition of aminopropanol on the F carboxylic group. The chain is Cobalamin biosynthesis protein CobD from Dehalococcoides mccartyi (strain CBDB1).